The chain runs to 680 residues: NADPH--cytochrome P450 reductase (680 aa).

Residues 1–5 (MALDK) are Lumenal-facing. Residues 6–23 (LDLYVIIVLAVAVAAYFA) form a helical membrane-spanning segment. The Cytoplasmic segment spans residues 24-680 (KNQFLDQPQD…VQNRYQEDVW (657 aa)). The region spanning 60 to 204 (TLLLFGSQTG…DFLTWKDNVF (145 aa)) is the Flavodoxin-like domain. FMN-binding positions include 66 to 71 (SQTGTA), 117 to 120 (ATYG), 152 to 161 (LGNSTYEFYN), and D187. Residues 264–509 (THPYLAKISK…SGPRNKFNKF (246 aa)) enclose the FAD-binding FR-type domain. Residue R283 participates in NADP(+) binding. Residues 439–442 (RYYS), 457–459 (TAV), and 473–476 (GVVT) each bind FAD. NADP(+) contacts are provided by residues T537, 599 to 600 (SR), 606 to 610 (KVYVQ), and D642. W680 serves as a coordination point for FAD.

The protein belongs to the NADPH--cytochrome P450 reductase family. This sequence in the N-terminal section; belongs to the flavodoxin family. It in the C-terminal section; belongs to the flavoprotein pyridine nucleotide cytochrome reductase family. FAD serves as cofactor. Requires FMN as cofactor.

It is found in the endoplasmic reticulum membrane. The protein localises to the mitochondrion outer membrane. Its subcellular location is the cell membrane. The enzyme catalyses 2 oxidized [cytochrome P450] + NADPH = 2 reduced [cytochrome P450] + NADP(+) + H(+). Its function is as follows. This enzyme is required for electron transfer from NADP to cytochrome P450 in microsomes. It can also provide electron transfer to heme oxygenase and cytochrome B5. Involved in ergosterol biosynthesis. The chain is NADPH--cytochrome P450 reductase from Candida maltosa (Yeast).